The chain runs to 361 residues: 3-dehydroquinate synthase (361 aa).

NAD(+)-binding positions include 70–75 (DGEQHK), 104–108 (GVVGD), 128–129 (TT), Lys141, and Lys150. The Zn(2+) site is built by Glu183, His246, and His263.

The protein belongs to the sugar phosphate cyclases superfamily. Dehydroquinate synthase family. Co(2+) is required as a cofactor. The cofactor is Zn(2+). It depends on NAD(+) as a cofactor.

Its subcellular location is the cytoplasm. It catalyses the reaction 7-phospho-2-dehydro-3-deoxy-D-arabino-heptonate = 3-dehydroquinate + phosphate. The protein operates within metabolic intermediate biosynthesis; chorismate biosynthesis; chorismate from D-erythrose 4-phosphate and phosphoenolpyruvate: step 2/7. Its function is as follows. Catalyzes the conversion of 3-deoxy-D-arabino-heptulosonate 7-phosphate (DAHP) to dehydroquinate (DHQ). The chain is 3-dehydroquinate synthase from Teredinibacter turnerae (strain ATCC 39867 / T7901).